Consider the following 552-residue polypeptide: uncharacterized protein (552 aa).

Residues 8–200 (KLFADMIIQG…LLCVYEGFLK (193 aa)) enclose the DhaL domain.

This is an uncharacterized protein from Staphylococcus epidermidis (strain ATCC 35984 / DSM 28319 / BCRC 17069 / CCUG 31568 / BM 3577 / RP62A).